Reading from the N-terminus, the 422-residue chain is Phytoene synthase 1, chloroplastic (422 aa).

A chloroplast-targeting transit peptide spans 1 to 70; sequence MSSSVAVLWV…NRSRRIGVVS (70 aa).

It belongs to the phytoene/squalene synthase family. As to quaternary structure, monomer. Interacts with OR. Interacts with ORLIKE.

It localises to the plastid. The protein localises to the chloroplast membrane. It carries out the reaction 2 (2E,6E,10E)-geranylgeranyl diphosphate = 15-cis-phytoene + 2 diphosphate. The protein operates within carotenoid biosynthesis; phytoene biosynthesis; all-trans-phytoene from geranylgeranyl diphosphate: step 1/1. Catalyzes the reaction from prephytoene diphosphate to phytoene. The sequence is that of Phytoene synthase 1, chloroplastic from Arabidopsis thaliana (Mouse-ear cress).